We begin with the raw amino-acid sequence, 471 residues long: Glutamate--tRNA ligase (471 aa).

A 'HIGH' region motif is present at residues 10 to 20 (PSPTGYLHIGG). 4 residues coordinate Zn(2+): Cys107, Cys109, Cys134, and Glu136. Positions 244-248 (RLSKR) match the 'KMSKS' region motif. ATP is bound at residue Lys247.

This sequence belongs to the class-I aminoacyl-tRNA synthetase family. Glutamate--tRNA ligase type 1 subfamily. Monomer. It depends on Zn(2+) as a cofactor.

It localises to the cytoplasm. It carries out the reaction tRNA(Glu) + L-glutamate + ATP = L-glutamyl-tRNA(Glu) + AMP + diphosphate. Functionally, catalyzes the attachment of glutamate to tRNA(Glu) in a two-step reaction: glutamate is first activated by ATP to form Glu-AMP and then transferred to the acceptor end of tRNA(Glu). This is Glutamate--tRNA ligase from Anaeromyxobacter sp. (strain Fw109-5).